A 511-amino-acid polypeptide reads, in one-letter code: Probable dolichyl pyrophosphate Glc1Man9GlcNAc2 alpha-1,3-glucosyltransferase (511 aa).

A run of 11 helical transmembrane segments spans residues 4-24, 94-112, 124-144, 151-171, 210-230, 300-320, 332-352, 356-370, 377-394, 432-452, and 469-491; these read LFWHLVGIATGLKILLIPAYH, VYFQRLSVIVTDLVYVLGV, DTQQFFAASMLLLLNVGLIFV, YNGLLFGILLLSIGSLIRQRF, VVSAVGAVVKLLVVGLTPFAV, PAITPPVTFALTALFMLPILV, LVFLRAVVLCGCSSFVFGWHV, AILMVLLPLCLLTLV, YAYVLGIAGYFSLFPLLF, WLYMLGFMAIPLYEHLLSFLL, and YSALGVLYFFGAYYLYALGISWG.

Belongs to the ALG6/ALG8 glucosyltransferase family.

The protein resides in the endoplasmic reticulum membrane. The catalysed reaction is an alpha-D-Glc-(1-&gt;3)-alpha-D-Man-(1-&gt;2)-alpha-D-Man-(1-&gt;2)-alpha-D-Man-(1-&gt;3)-[alpha-D-Man-(1-&gt;2)-alpha-D-Man-(1-&gt;3)-[alpha-D-Man-(1-&gt;2)-alpha-D-Man-(1-&gt;6)]-alpha-D-Man-(1-&gt;6)]-beta-D-Man-(1-&gt;4)-beta-D-GlcNAc-(1-&gt;4)-alpha-D-GlcNAc-diphospho-di-trans,poly-cis-dolichol + a di-trans,poly-cis-dolichyl beta-D-glucosyl phosphate = an alpha-D-Glc-(1-&gt;3)-alpha-D-Glc-(1-&gt;3)-alpha-D-Man-(1-&gt;2)-alpha-D-Man-(1-&gt;2)-alpha-D-Man-(1-&gt;3)-[alpha-D-Man-(1-&gt;2)-alpha-D-Man-(1-&gt;3)-[alpha-D-Man-(1-&gt;2)-alpha-D-Man-(1-&gt;6)]-alpha-D-Man-(1-&gt;6)]-beta-D-Man-(1-&gt;4)-beta-D-GlcNAc-(1-&gt;4)-alpha-D-GlcNAc-diphospho-di-trans,poly-cis-dolichol + a di-trans,poly-cis-dolichyl phosphate + H(+). Its pathway is protein modification; protein glycosylation. Adds the second glucose residue to the lipid-linked oligosaccharide precursor for N-linked glycosylation. Transfers glucose from dolichyl phosphate glucose (Dol-P-Glc) onto the lipid-linked oligosaccharide Glc(1)Man(9)GlcNAc(2)-PP-Dol. Functions in developmental processes such as germband extension, the apical constriction of mesoderm precursor cells and ventral furrow formation in early embryogenesis prior to gastrulation. Involved in the glycosylation and intracellular distribution of shg (E-cadherin). Function in cell intercalation in the lateral epidermis during germband extension may be due to its effect on shg. This chain is Probable dolichyl pyrophosphate Glc1Man9GlcNAc2 alpha-1,3-glucosyltransferase, found in Drosophila melanogaster (Fruit fly).